A 768-amino-acid polypeptide reads, in one-letter code: Probable LRR receptor-like serine/threonine-protein kinase At4g37250 (768 aa).

The signal sequence occupies residues 1 to 21; sequence MRMELISVIFFFFCSVLSSSA. Over 22–328 the chain is Extracellular; the sequence is LNSDGLVLMK…PNPRTGLRPG (307 aa). Asn64 carries N-linked (GlcNAc...) asparagine glycosylation. LRR repeat units follow at residues 67–90, 91–112, 115–137, 139–162, 163–183, 184–206, 207–229, and 232–254; these read KVLT…GSLL, TLQS…SFFN, ELRF…IGDL, NLLT…ASLR, NLTV…GGWR, VVEF…FGGY, SLQY…IGVN, and RNVT…PVFL. Asn99 carries an N-linked (GlcNAc...) asparagine glycan. N-linked (GlcNAc...) asparagine glycans are attached at residues Asn144, Asn163, Asn196, Asn212, Asn233, and Asn242. Residues 301–324 are disordered; sequence PNTIGSNPVTDPNSQQTDPNPRTG. Over residues 303–320 the composition is skewed to polar residues; the sequence is TIGSNPVTDPNSQQTDPN. Residues 329 to 349 form a helical membrane-spanning segment; the sequence is VIIGIVVGDIAGIGILAVIFL. Residues 350 to 768 are Cytoplasmic-facing; it reads YIYRCKKNKI…IKSSSFHYGH (419 aa). The disordered stretch occupies residues 361-432; sequence DNNNNDKQRT…NANQRSGDNK (72 aa). Residues 378-387 show a composition bias toward low complexity; the sequence is STFSSSSSSP. Residues 407–420 show a composition bias toward acidic residues; sequence PSEEEDEDDEDEES. The 308-residue stretch at 449–756 folds into the Protein kinase domain; sequence KASAYILGAT…AVLERFHPNS (308 aa). Ser451 and Ser531 each carry phosphoserine. At Thr553 the chain carries Phosphothreonine. The residue at position 662 (Ser662) is a Phosphoserine.

This sequence belongs to the protein kinase superfamily. Ser/Thr protein kinase family.

Its subcellular location is the membrane. The catalysed reaction is L-seryl-[protein] + ATP = O-phospho-L-seryl-[protein] + ADP + H(+). The enzyme catalyses L-threonyl-[protein] + ATP = O-phospho-L-threonyl-[protein] + ADP + H(+). The sequence is that of Probable LRR receptor-like serine/threonine-protein kinase At4g37250 from Arabidopsis thaliana (Mouse-ear cress).